We begin with the raw amino-acid sequence, 457 residues long: Putative ankyrin repeat protein L112 (457 aa).

ANK repeat units lie at residues Gln-62–Pro-91, Ser-104–Asn-132, Ser-133–Asn-162, Tyr-193–Ser-219, Ile-220–Lys-249, Lys-251–Glu-279, Asn-281–Thr-309, Arg-310–Ser-339, Asn-341–Gln-368, Asn-400–Pro-429, and Lys-431–Lys-457.

In Acanthamoeba polyphaga mimivirus (APMV), this protein is Putative ankyrin repeat protein L112.